Here is a 363-residue protein sequence, read N- to C-terminus: Aminomethyltransferase (363 aa).

It belongs to the GcvT family. As to quaternary structure, the glycine cleavage system is composed of four proteins: P, T, L and H.

It catalyses the reaction N(6)-[(R)-S(8)-aminomethyldihydrolipoyl]-L-lysyl-[protein] + (6S)-5,6,7,8-tetrahydrofolate = N(6)-[(R)-dihydrolipoyl]-L-lysyl-[protein] + (6R)-5,10-methylene-5,6,7,8-tetrahydrofolate + NH4(+). In terms of biological role, the glycine cleavage system catalyzes the degradation of glycine. This chain is Aminomethyltransferase, found in Nitrosomonas europaea (strain ATCC 19718 / CIP 103999 / KCTC 2705 / NBRC 14298).